The following is a 560-amino-acid chain: Transcription termination factor 5, mitochondrial (560 aa).

The N-terminal 23 residues, 1–23, are a transit peptide targeting the mitochondrion; that stretch reads MLRNGQNQAQLLARSLGQLARGM. Positions 23 to 47 are disordered; sequence MASSKRVSSKKEDLKPKLPKPPTVE.

This sequence belongs to the mTERF family. In terms of assembly, probably binds to the mTTF-DNA complex.

It localises to the mitochondrion. In terms of biological role, binds promoter DNA and regulates initiation of transcription. Regulates mitochondrial replication and transcription. Required for normal topology and maintenance of mitochondrial DNA (mtDNA) levels. Regulates mtDNA replication by re-activating replication after replication pausing. Likely to regulate replication pausing by coordinating with the mitochondrial termination factor mTTF which promotes replication pausing. Their function in replication pausing prevents unregulated replication that may occur for example by collisions between the machineries of DNA replication and transcription during mtDNA synthesis. This ensures the incorporation of RNA transcripts into replication intermediates at the replication fork and allows for proper fork progression. Possibly functions downstream of Dref which activates genes involved in mtDNA replication and maintenance. This chain is Transcription termination factor 5, mitochondrial, found in Drosophila melanogaster (Fruit fly).